Here is a 363-residue protein sequence, read N- to C-terminus: Phosphoserine aminotransferase (363 aa).

R42 is an L-glutamate binding site. Pyridoxal 5'-phosphate contacts are provided by residues 76–77 (AS), W101, T151, D170, and Q193. K194 is subject to N6-(pyridoxal phosphate)lysine. 234–235 (NT) lines the pyridoxal 5'-phosphate pocket.

It belongs to the class-V pyridoxal-phosphate-dependent aminotransferase family. SerC subfamily. In terms of assembly, homodimer. It depends on pyridoxal 5'-phosphate as a cofactor.

The protein resides in the cytoplasm. The catalysed reaction is O-phospho-L-serine + 2-oxoglutarate = 3-phosphooxypyruvate + L-glutamate. The enzyme catalyses 4-(phosphooxy)-L-threonine + 2-oxoglutarate = (R)-3-hydroxy-2-oxo-4-phosphooxybutanoate + L-glutamate. Its pathway is amino-acid biosynthesis; L-serine biosynthesis; L-serine from 3-phospho-D-glycerate: step 2/3. Its function is as follows. Catalyzes the reversible conversion of 3-phosphohydroxypyruvate to phosphoserine and of 3-hydroxy-2-oxo-4-phosphonooxybutanoate to phosphohydroxythreonine. This Listeria monocytogenes serotype 4b (strain F2365) protein is Phosphoserine aminotransferase.